The chain runs to 539 residues: CTP synthase (539 aa).

Residues 1 to 267 (MTKYIFVTGG…DQKVVDFLHI (267 aa)) form an amidoligase domain region. Residue Ser13 coordinates CTP. Ser13 lines the UTP pocket. 14 to 19 (SLGKGI) contributes to the ATP binding site. Residue Tyr54 coordinates L-glutamine. Residue Asp71 coordinates ATP. Residues Asp71 and Glu141 each contribute to the Mg(2+) site. Residues 148–150 (DME), 188–193 (KSKPTQ), and Lys224 each bind CTP. Residues 188-193 (KSKPTQ) and Lys224 each bind UTP. A Glutamine amidotransferase type-1 domain is found at 294–537 (KITLVGKYVE…IGAASGLQVD (244 aa)). Gly356 serves as a coordination point for L-glutamine. Cys383 functions as the Nucleophile; for glutamine hydrolysis in the catalytic mechanism. L-glutamine-binding positions include 384 to 387 (LGMQ), Glu407, and Arg465. Active-site residues include His510 and Glu512.

It belongs to the CTP synthase family. In terms of assembly, homotetramer.

The enzyme catalyses UTP + L-glutamine + ATP + H2O = CTP + L-glutamate + ADP + phosphate + 2 H(+). It catalyses the reaction L-glutamine + H2O = L-glutamate + NH4(+). It carries out the reaction UTP + NH4(+) + ATP = CTP + ADP + phosphate + 2 H(+). Its pathway is pyrimidine metabolism; CTP biosynthesis via de novo pathway; CTP from UDP: step 2/2. Allosterically activated by GTP, when glutamine is the substrate; GTP has no effect on the reaction when ammonia is the substrate. The allosteric effector GTP functions by stabilizing the protein conformation that binds the tetrahedral intermediate(s) formed during glutamine hydrolysis. Inhibited by the product CTP, via allosteric rather than competitive inhibition. In terms of biological role, catalyzes the ATP-dependent amination of UTP to CTP with either L-glutamine or ammonia as the source of nitrogen. Regulates intracellular CTP levels through interactions with the four ribonucleotide triphosphates. The polypeptide is CTP synthase (Lactobacillus delbrueckii subsp. bulgaricus (strain ATCC BAA-365 / Lb-18)).